Here is a 105-residue protein sequence, read N- to C-terminus: Vacuolar ATPase assembly integral membrane protein VMA21 homolog (105 aa).

The tract at residues 1 to 26 (MSTKNKKAAGGNGVAPKQTRQQSHDS) is disordered. At 1-36 (MSTKNKKAAGGNGVAPKQTRQQSHDSQDYSSFKTVL) the chain is on the cytoplasmic side. Residues 37-57 (FYCMLIVFLPVLTFFVLKGFV) traverse the membrane as a helical segment. Over 58–68 (LDQFLDISEVK) the chain is Lumenal. Residues 69–89 (VNIASAVGAVVALHIALGLYI) form a helical membrane-spanning segment. The Cytoplasmic segment spans residues 90–105 (YRAYFGAPGSKGSKTD).

Belongs to the VMA21 family.

The protein resides in the endoplasmic reticulum membrane. Its subcellular location is the endoplasmic reticulum-Golgi intermediate compartment membrane. It is found in the cytoplasmic vesicle. The protein localises to the COPII-coated vesicle membrane. Its function is as follows. Required for the assembly of the V0 complex of the vacuolar ATPase (V-ATPase) in the endoplasmic reticulum. The polypeptide is Vacuolar ATPase assembly integral membrane protein VMA21 homolog (Drosophila melanogaster (Fruit fly)).